The sequence spans 617 residues: Hemagglutinin glycoprotein (617 aa).

Residues 1–37 (MSPQRDRINAFYKDNPHPKGSRIVINREHLMIDRPYV) lie on the Intravirion side of the membrane. The interval 1 to 154 (MSPQRDRINA…RIKLDYDQYC (154 aa)) is stalk. The helical; Signal-anchor for type II membrane protein transmembrane segment at 38 to 58 (LLAVLFVMFLSLIGLLAIAGI) threads the bilayer. Residues 59 to 617 (RLHRAAIYTA…VTREDGTNRR (559 aa)) lie on the Virion surface side of the membrane. Residues asparagine 168, asparagine 187, asparagine 200, asparagine 215, and asparagine 238 are each glycosylated (N-linked (GlcNAc...) asparagine; by host). Cystine bridges form between cysteine 188–cysteine 606, cysteine 287–cysteine 300, cysteine 381–cysteine 494, cysteine 386–cysteine 394, and cysteine 570–cysteine 579. The interval 458–543 (PMKNLALGVI…VEHAVVYYVY (86 aa)) is interaction with host NECTIN4 receptor.

Belongs to the paramyxoviruses hemagglutinin-neuraminidase family. Non-sialidase subfamily. In terms of assembly, homodimer; disulfide-linked. Further forms homotetramer (dimer of dimers). Interacts (via C-terminus) with human NECTIN4 (via N-terminus); this interaction allows attachment to the respiratory epithelium and viral entry. Interacts (via C-terminus) with human SLAMF1/CD150 (via N-terminus); this interaction allows attachment and viral entry into the CD150-expressing immune cells. Interacts with human CD46 antigen; this interaction allows attachment and viral entry of vaccine and laboratory-adapted strains.

It localises to the virion membrane. Its subcellular location is the host cell membrane. Its function is as follows. Attaches the virus to the human SLAMF1/CD150 receptor for entry into host dendritic cells, macrophages, activated memory T cells and naive or memory B cells, thereby explaining the long immunosuppression that follows infection. In the respiratory airways, binds to the NECTIN4 receptor for entry into the host cell. Binding of H protein to the receptor induces a conformational change that allows the F protein to trigger virion/cell membranes fusion. The vaccine and laboratory-adapted strains use host CD46 as an alternate receptor. The high degree of interaction between H and CD46 results in down-regulation of the latter from the surface of infected cells, rendering them more sensitive to c3b-mediated complement lysis. This chain is Hemagglutinin glycoprotein (H), found in Homo sapiens (Human).